A 410-amino-acid chain; its full sequence is MTARLALLASLLLLLQLVPPSSAVVLELHGNVYPIGHFFVTMNIGDPAKPYFLDIDTGSTLTWLQCDYPCINCNKVPHGLYKPELKYAVKCTEQRCADLYADLRKPMKCGPKNQCHYGIQYVGGSSIGVLIVDSFSLPASNGTNPTSIAFGCGYNQGKNNHNVPTPVNGILGLGRGKVTLLSQLKSQGVITKHVLGHCISSKGKGFLFFGDAKVPTSGVTWSPMNREHKHYSPRQGTLQFNSNSKPISAAPMEVIFDSGATYTYFALQPYHATLSVVKSTLSKECKFLTEVKEKDRALTVCWKGKDKIRTIDEVKKCFRSLSLKFADGDKKATLEIPPEHYLIISQEGHVCLGILDGSKEHPSLAGTNLIGGITMLDQMVIYDSERSLLGWVNYQCDRIPRSASAITSRL.

The signal sequence occupies residues 1–23 (MTARLALLASLLLLLQLVPPSSA). A propeptide spans 24 to 46 (VVLELHGNVYPIGHFFVTMNIGD) (removed in mature form). Positions 38-392 (FFVTMNIGDP…DSERSLLGWV (355 aa)) constitute a Peptidase A1 domain. Residues D56 and D257 contribute to the active site.

The protein belongs to the peptidase A1 family. In terms of tissue distribution, expressed in pollen, nucellus, ovary wall, shoot and root meristem, coleoptiles of immature seeds, and somatic embryos.

Functionally, possesses protease activity in vitro. This chain is Aspartic proteinase Asp1 (ASP1), found in Oryza sativa subsp. indica (Rice).